The chain runs to 211 residues: UPF0056 membrane protein YvbG (211 aa).

A run of 6 helical transmembrane segments spans residues 1 to 21 (MMFS…NPIG), 47 to 67 (ILSF…FKLF), 69 to 89 (INIH…AYNL), 114 to 134 (ISVT…ATVM), 150 to 170 (MIGI…SAFI), and 188 to 208 (LILA…MFPV).

This sequence belongs to the UPF0056 (MarC) family.

Its subcellular location is the cell membrane. The protein is UPF0056 membrane protein YvbG (yvbG) of Bacillus subtilis (strain 168).